Consider the following 280-residue polypeptide: Shikimate dehydrogenase (NADP(+)) (280 aa).

Shikimate is bound by residues 20 to 22 and Thr67; that span reads SRS. The active-site Proton acceptor is Lys71. NADP(+) is bound at residue Asp82. 2 residues coordinate shikimate: Asn91 and Asp106. NADP(+) contacts are provided by residues 131 to 135 and Leu220; that span reads GAGGS. Tyr222 is a binding site for shikimate. Gly243 is an NADP(+) binding site.

Belongs to the shikimate dehydrogenase family. Homodimer.

The enzyme catalyses shikimate + NADP(+) = 3-dehydroshikimate + NADPH + H(+). The protein operates within metabolic intermediate biosynthesis; chorismate biosynthesis; chorismate from D-erythrose 4-phosphate and phosphoenolpyruvate: step 4/7. Its function is as follows. Involved in the biosynthesis of the chorismate, which leads to the biosynthesis of aromatic amino acids. Catalyzes the reversible NADPH linked reduction of 3-dehydroshikimate (DHSA) to yield shikimate (SA). The chain is Shikimate dehydrogenase (NADP(+)) from Rhodopseudomonas palustris (strain HaA2).